The primary structure comprises 1835 residues: AT-rich interactive domain-containing protein 2 (1835 aa).

Ala-2 carries the post-translational modification N-acetylalanine. Ser-4 carries the phosphoserine modification. Glycyl lysine isopeptide (Lys-Gly) (interchain with G-Cter in SUMO2) cross-links involve residues Lys-7, Lys-15, and Lys-119. An ARID domain is found at 13-105; the sequence is RRKGLAFLDE…YLEKYEKVHH (93 aa). An LXXLL motif is present at residues 313–317; that stretch reads LRFLL. Positions 524-603 form a DNA-binding region, RFX-type winged-helix; that stretch reads ACQWLNAHFE…IHVVGVKRRA (80 aa). Lys-555 is covalently cross-linked (Glycyl lysine isopeptide (Lys-Gly) (interchain with G-Cter in SUMO2)). A phosphoserine mark is found at Ser-631 and Ser-635. Position 653 is a phosphothreonine (Thr-653). Position 689 is a phosphoserine (Ser-689). Position 692 is a phosphothreonine (Thr-692). 5 disordered regions span residues 819–844, 962–1057, 1266–1287, 1295–1314, and 1321–1341; these read QQLITTSPQPVQTSSQQTSAGSQSQD, LTGQ…SGES, MENPSCRRGATNTSNGDTKENE, NGRKYSDSSLPPSNSGKIQS, and LISNGPSLELGENGASGKQNS. Composition is skewed to low complexity over residues 823–843, 985–996, and 1025–1044; these read TTSPQPVQTSSQQTSAGSQSQ, PTAMSSSSTPQS, and QVQVQVQQPQQVQMQVQPQQ. The residue at position 1300 (Ser-1300) is a Phosphoserine. The span at 1301–1314 shows a compositional bias: polar residues; that stretch reads DSSLPPSNSGKIQS. 2 positions are modified to phosphoserine: Ser-1391 and Ser-1496. 2 disordered regions span residues 1488–1522 and 1572–1629; these read DSGSKVSHSPALSSDVRSTNGTAECKTVKRPAEDT and SAVQ…RKPG. The span at 1491-1509 shows a compositional bias: polar residues; it reads SKVSHSPALSSDVRSTNGT. Basic and acidic residues predominate over residues 1513–1522; that stretch reads KTVKRPAEDT. The segment covering 1573–1592 has biased composition (polar residues); it reads AVQQKQQHPPTYVQNVVPQN. The segment covering 1602–1623 has biased composition (low complexity); it reads QVQGQPNSSQPSPFSGSSQPGD. The segment at 1632–1657 adopts a C2H2-type zinc-finger fold; it reads FMCLWQSCKKWFQTPSQVFYHAATEH. Glycyl lysine isopeptide (Lys-Gly) (interchain with G-Cter in SUMO2) cross-links involve residues Lys-1701, Lys-1716, and Lys-1731. The interval 1703 to 1728 is disordered; the sequence is DEPGQAGSQKSSTKQPTVGGTSSTPR. The span at 1708–1728 shows a compositional bias: polar residues; it reads AGSQKSSTKQPTVGGTSSTPR.

Component of the SWI/SNF-B (PBAF) chromatin remodeling complex, at least composed of SMARCA4/BRG1, SMARCB1/BAF47/SNF5, ACTL6A/BAF53A or ACTL6B/BAF53B, SMARCE1/BAF57, SMARCD1/BAF60A, SMARCD2/BAF60B, perhaps SMARCD3/BAF60C, SMARCC1/BAF155, SMARCC2/BAF170, PBRM1/BAF180, ARID2/BAF200 and actin. Interacts with SRF. Forms complexes with SRF and SRF cofactors MYOCD, NKX2-5 and SRFBP1. In terms of tissue distribution, highly expressed in heart.

The protein localises to the nucleus. Involved in transcriptional activation and repression of select genes by chromatin remodeling (alteration of DNA-nucleosome topology). Required for the stability of the SWI/SNF chromatin remodeling complex SWI/SNF-B (PBAF). May be involved in targeting the complex to different genes. May be involved in regulating transcriptional activation of cardiac genes. In Homo sapiens (Human), this protein is AT-rich interactive domain-containing protein 2.